We begin with the raw amino-acid sequence, 132 residues long: Small ribosomal subunit protein uS8 (132 aa).

Belongs to the universal ribosomal protein uS8 family. In terms of assembly, part of the 30S ribosomal subunit. Contacts proteins S5 and S12.

Functionally, one of the primary rRNA binding proteins, it binds directly to 16S rRNA central domain where it helps coordinate assembly of the platform of the 30S subunit. This is Small ribosomal subunit protein uS8 from Nitrobacter winogradskyi (strain ATCC 25391 / DSM 10237 / CIP 104748 / NCIMB 11846 / Nb-255).